The primary structure comprises 239 residues: Ribosomal RNA large subunit methyltransferase E (239 aa).

S-adenosyl-L-methionine contacts are provided by G81, W83, D104, D120, and D144. Catalysis depends on K184, which acts as the Proton acceptor.

This sequence belongs to the class I-like SAM-binding methyltransferase superfamily. RNA methyltransferase RlmE family.

Its subcellular location is the cytoplasm. It carries out the reaction uridine(2552) in 23S rRNA + S-adenosyl-L-methionine = 2'-O-methyluridine(2552) in 23S rRNA + S-adenosyl-L-homocysteine + H(+). Functionally, specifically methylates the uridine in position 2552 of 23S rRNA at the 2'-O position of the ribose in the fully assembled 50S ribosomal subunit. The chain is Ribosomal RNA large subunit methyltransferase E from Rhizobium rhizogenes (strain K84 / ATCC BAA-868) (Agrobacterium radiobacter).